A 247-amino-acid polypeptide reads, in one-letter code: 4-nitrobenzoate reductase (247 aa).

Position 29-33 (29-33 (RRSVR)) interacts with FMN. NADP(+) contacts are provided by Ser-59, Arg-112, Tyr-120, and Leu-126. Arg-232 provides a ligand contact to FMN.

This sequence belongs to the nitroreductase family. It depends on FMN as a cofactor.

It carries out the reaction 4-nitrobenzoate + 2 NADPH + 2 H(+) = 4-hydroxylaminobenzoate + 2 NADP(+) + H2O. Its function is as follows. Nitroreductase involved in the degradation of nitroaromatic compounds. Catalyzes the conversion of 4-nitrobenzoate to 4-hydroxylaminobenzoate. This is 4-nitrobenzoate reductase from Nocardioides sp. (strain LMS-CY).